A 63-amino-acid polypeptide reads, in one-letter code: Bucandin (63 aa).

5 cysteine pairs are disulfide-bonded: C3/C24, C6/C11, C17/C39, C43/C55, and C56/C61.

In terms of tissue distribution, expressed by the venom gland.

The protein resides in the secreted. In terms of biological role, this toxin is described as enhancing presynaptic acetylcholine release, but neither experimental results, nor references to other sources are available. The polypeptide is Bucandin (Bungarus candidus (Malayan krait)).